We begin with the raw amino-acid sequence, 262 residues long: Phosphonates import ATP-binding protein PhnC (262 aa).

Residues 5-253 enclose the ABC transporter domain; it reads IRVEKLAKTF…RFDHLYRSIN (249 aa). 37 to 44 contributes to the ATP binding site; it reads GPSGSGKS.

It belongs to the ABC transporter superfamily. Phosphonates importer (TC 3.A.1.9.1) family. As to quaternary structure, the complex is composed of two ATP-binding proteins (PhnC), two transmembrane proteins (PhnE) and a solute-binding protein (PhnD).

It is found in the cell inner membrane. The catalysed reaction is phosphonate(out) + ATP + H2O = phosphonate(in) + ADP + phosphate + H(+). Its function is as follows. Part of the ABC transporter complex PhnCDE involved in phosphonates import. Responsible for energy coupling to the transport system. The sequence is that of Phosphonates import ATP-binding protein PhnC from Escherichia coli (strain UTI89 / UPEC).